The sequence spans 485 residues: Adenosylhomocysteinase (485 aa).

Residues threonine 60, aspartate 146, and glutamate 208 each contribute to the substrate site. 209-211 contacts NAD(+); the sequence is TTT. 2 residues coordinate substrate: lysine 238 and aspartate 242. NAD(+)-binding positions include asparagine 243, 272-277, glutamate 295, asparagine 330, 351-353, and asparagine 399; these read GYGDVG and IGH.

It belongs to the adenosylhomocysteinase family. Requires NAD(+) as cofactor.

The protein resides in the cytoplasm. The enzyme catalyses S-adenosyl-L-homocysteine + H2O = L-homocysteine + adenosine. The protein operates within amino-acid biosynthesis; L-homocysteine biosynthesis; L-homocysteine from S-adenosyl-L-homocysteine: step 1/1. In terms of biological role, may play a key role in the regulation of the intracellular concentration of adenosylhomocysteine. The chain is Adenosylhomocysteinase from Streptomyces coelicolor (strain ATCC BAA-471 / A3(2) / M145).